We begin with the raw amino-acid sequence, 678 residues long: DNA ligase (678 aa).

NAD(+) is bound by residues 35 to 39 (DSVYD), 84 to 85 (SL), and glutamate 116. The active-site N6-AMP-lysine intermediate is lysine 118. The NAD(+) site is built by arginine 139, glutamate 178, lysine 297, and lysine 321. Zn(2+)-binding residues include cysteine 415, cysteine 418, cysteine 433, and cysteine 438. Positions 600–678 (DGNQIFAGKT…EAQLLEMLNE (79 aa)) constitute a BRCT domain.

It belongs to the NAD-dependent DNA ligase family. LigA subfamily. Mg(2+) is required as a cofactor. It depends on Mn(2+) as a cofactor.

The enzyme catalyses NAD(+) + (deoxyribonucleotide)n-3'-hydroxyl + 5'-phospho-(deoxyribonucleotide)m = (deoxyribonucleotide)n+m + AMP + beta-nicotinamide D-nucleotide.. In terms of biological role, DNA ligase that catalyzes the formation of phosphodiester linkages between 5'-phosphoryl and 3'-hydroxyl groups in double-stranded DNA using NAD as a coenzyme and as the energy source for the reaction. It is essential for DNA replication and repair of damaged DNA. This Nostoc punctiforme (strain ATCC 29133 / PCC 73102) protein is DNA ligase.